The primary structure comprises 351 residues: Cytosolic sulfotransferase 9 (351 aa).

Positions 1–11 (MDEKDILRNLR) are enriched in basic and acidic residues. The segment at 1 to 24 (MDEKDILRNLREEEEEEEENQSEE) is disordered. A compositionally biased stretch (acidic residues) spans 12–22 (EEEEEEEENQS). Residue 80-85 (KSGTTW) coordinates 3'-phosphoadenylyl sulfate. His-152 functions as the Proton acceptor in the catalytic mechanism. 3'-phosphoadenylyl sulfate contacts are provided by residues Arg-174, Ser-182, Tyr-252, and 317–319 (RKG).

The protein belongs to the sulfotransferase 1 family. In terms of tissue distribution, expressed in roots and leaves.

The protein localises to the cytoplasm. Its function is as follows. Sulfotransferase that utilizes 3'-phospho-5'-adenylyl sulfate (PAPS) as sulfonate donor. No activity with brassinosteroids. This is Cytosolic sulfotransferase 9 (STO9) from Arabidopsis thaliana (Mouse-ear cress).